A 200-amino-acid chain; its full sequence is Recombination protein RecR (200 aa).

The C4-type zinc finger occupies 59–74 (CSVCFHLSADPVCDIC). In terms of domain architecture, Toprim spans 82–176 (TVICVVADSR…RVTRIAFGLP (95 aa)).

The protein belongs to the RecR family.

Functionally, may play a role in DNA repair. It seems to be involved in an RecBC-independent recombinational process of DNA repair. It may act with RecF and RecO. The sequence is that of Recombination protein RecR from Acaryochloris marina (strain MBIC 11017).